Reading from the N-terminus, the 129-residue chain is MAKEAARVRRRERKNISSGVAHVNSTFNNTMITITDAQGNSIAWSSAGAQGFKGSRKSTPFAAQMAAEDVAKKAQEHGMRMLEVEVCGPGSGRESALRALQAAGFTITSIRDVTPIPHNGCRPRKKRRV.

This sequence belongs to the universal ribosomal protein uS11 family. As to quaternary structure, part of the 30S ribosomal subunit. Interacts with proteins S7 and S18. Binds to IF-3.

Functionally, located on the platform of the 30S subunit, it bridges several disparate RNA helices of the 16S rRNA. Forms part of the Shine-Dalgarno cleft in the 70S ribosome. This chain is Small ribosomal subunit protein uS11, found in Mesorhizobium japonicum (strain LMG 29417 / CECT 9101 / MAFF 303099) (Mesorhizobium loti (strain MAFF 303099)).